The sequence spans 458 residues: Cysteine--tRNA ligase (458 aa).

Cys-27 contacts Zn(2+). Positions 29 to 39 (MTVYDYMHIGH) match the 'HIGH' region motif. Residues Cys-208, His-233, and Glu-237 each contribute to the Zn(2+) site. The 'KMSKS' region signature appears at 265–269 (KMSKS). An ATP-binding site is contributed by Lys-268.

Belongs to the class-I aminoacyl-tRNA synthetase family. As to quaternary structure, monomer. It depends on Zn(2+) as a cofactor.

The protein resides in the cytoplasm. The enzyme catalyses tRNA(Cys) + L-cysteine + ATP = L-cysteinyl-tRNA(Cys) + AMP + diphosphate. The polypeptide is Cysteine--tRNA ligase (Coxiella burnetii (strain Dugway 5J108-111)).